The sequence spans 164 residues: D-aminoacyl-tRNA deacylase (164 aa).

Tryptophan 72 and phenylalanine 89 together coordinate tRNA. Catalysis depends on threonine 90, which acts as the Nucleophile. Positions 104 to 107 (HLAK) match the C-terminal adenosine nucleotide of tRNA motif. The short motif at 149–150 (GP) is the Gly-cisPro motif, allows the protein to recognize chirality of D-amino acids element.

The protein belongs to the DTD family. As to quaternary structure, homodimer.

The protein resides in the cytoplasm. The enzyme catalyses glycyl-tRNA(Ala) + H2O = tRNA(Ala) + glycine + H(+). The catalysed reaction is a D-aminoacyl-tRNA + H2O = a tRNA + a D-alpha-amino acid + H(+). It catalyses the reaction D-tyrosyl-tRNA(Tyr) + H2O = D-tyrosine + tRNA(Tyr). Functionally, D-aminoacyl-tRNA deacylase, with no observable activity on tRNAs charged with their cognate L-amino acid. Probably acts by rejecting L-amino acids from its binding site rather than specific recognition of D-amino acids. Catalyzes the hydrolysis of D-tyrosyl-tRNA(Tyr), has no activity on correctly charged L-tyrosyl-tRNA(Tyr). Hydrolyzes correctly charged, achiral, glycyl-tRNA(Gly). Deacylates mischarged D.melanogaster and E.coli glycyl-tRNA(Ala). Probably acts via tRNA-based rather than protein-based catalysis. Acts on tRNAs only when the D-amino acid is either attached to the ribose 3'-OH or transferred to the 3'-OH from the 2'-OH through rapid transesterification. Binds a number of other D-amino acids (D-Arg, D-Glu, D-His, D-Lys, D-Ser), suggesting it may also deacylate other mischarged tRNAs. The protein is D-aminoacyl-tRNA deacylase of Plasmodium falciparum (isolate 3D7).